The chain runs to 297 residues: F-box only protein 2 (297 aa).

Residues Met-1–Glu-42 form a disordered region. Residues Ala-16–Ala-27 show a composition bias toward acidic residues. Residues Ala-45–Lys-92 enclose the F-box domain. An FBA domain is found at Phe-114–Pro-297. Residues Arg-211–Asp-213 and Tyr-279–Trp-280 each bind a carbohydrate.

In terms of assembly, component of the SCF(FBXO2) complex consisting of CUL1, RBX1, SKP1 and FBXO2. Predominantly detected as heterodimer with SKP1; the heterodimer with SKP1 is not part of the SCF(FBXO2) complex.

The protein resides in the cytoplasm. It is found in the microsome membrane. Its pathway is protein modification; protein ubiquitination. Its function is as follows. Substrate recognition component of a SCF (SKP1-CUL1-F-box protein) E3 ubiquitin-protein ligase complex that mediates the ubiquitination and subsequent proteasomal degradation of target proteins. Involved in the endoplasmic reticulum-associated degradation pathway (ERAD) for misfolded lumenal proteins by recognizing and binding sugar chains on unfolded glycoproteins that are retrotranslocated into the cytosol and promoting their ubiquitination and subsequent degradation. Prevents formation of cytosolic aggregates of unfolded glycoproteins that have been retrotranslocated into the cytosol. Able to recognize and bind denatured glycoproteins, preferentially those of the high-mannose type. The protein is F-box only protein 2 (FBXO2) of Bos taurus (Bovine).